Here is a 551-residue protein sequence, read N- to C-terminus: Cleavage and polyadenylation specificity factor subunit 6 (551 aa).

A necessary for interaction with NXF1 region spans residues 1 to 213 (MADGVDHIDI…RGRFPGAVPG (213 aa)). Positions 81–161 (IALYIGNLTW…QNPVVTPCNK (81 aa)) constitute an RRM domain. A necessary for interaction with NUDT21/CPSF5 region spans residues 81 to 161 (IALYIGNLTW…QNPVVTPCNK (81 aa)). The segment at 81 to 161 (IALYIGNLTW…QNPVVTPCNK (81 aa)) is necessary for nuclear paraspeckles localization. Thr157 bears the Phosphothreonine mark. Residues 169 to 180 (MQSRKTTQSGQM) are compositionally biased toward polar residues. 2 disordered regions span residues 169 to 411 (MQSR…PLSE) and 477 to 551 (LHGI…YRHR). A GAR motif is present at residues 202-206 (RGRGR). Positions 207-219 (FPGAVPGGDRFPG) are enriched in low complexity. 3 stretches are compositionally biased toward pro residues: residues 220–265 (PAGP…PLAG), 285–366 (GQPP…PPPT), and 377–388 (GPPPTDPYGRPP). A (Microbial infection) Binds to HIV-1 capsid protein p24 (CA) region spans residues 358-551 (NPAFFPPPTN…RDREREYRHR (194 aa)). Residues 389–404 (PYDRGDYGPPGREMDT) show a composition bias toward basic and acidic residues. Phosphothreonine occurs at positions 404 and 407. The segment at 404–551 (TARTPLSEAE…RDREREYRHR (148 aa)) is sufficient for nuclear speckle localization. The segment at 405–551 (ARTPLSEAEF…RDREREYRHR (147 aa)) is necessary for RNA-binding. A necessary for interaction with SRSF3, SRSF7 and TRA2B/SFRS10 region spans residues 481 to 551 (ESKSYGSGSR…RDREREYRHR (71 aa)). Basic and acidic residues predominate over residues 489–503 (SRRERSRERDHSRSR). The arg/Ser-rich domain stretch occupies residues 490–551 (RRERSRERDH…RDREREYRHR (62 aa)). Phosphoserine occurs at positions 494, 500, 511, 513, and 525. Residues 504–514 (EKSRRHKSRSR) are compositionally biased toward basic residues. Residues 510-551 (KSRSRDRHDDYYRERSRERERHRDRDRDRDRERDREREYRHR) are sufficient for nuclear targeting. Positions 515 to 551 (DRHDDYYRERSRERERHRDRDRDRDRERDREREYRHR) are enriched in basic and acidic residues.

Belongs to the RRM CPSF6/7 family. Component of the cleavage factor Im (CFIm) complex which is a heterotetramer composed of two subunits of NUDT21/CPSF5 and two subunits of CPSF6 or CPSF7 or a heterodimer of CPSF6 and CPSF7. The cleavage factor Im (CFIm) complex associates with the CPSF and CSTF complexes to promote the assembly of the core mRNA 3'-processing machinery. Associates with the exon junction complex (EJC). Associates with the 80S ribosome particle. Interacts (via the RRM domain) with NUDT21/CPSF5; this interaction is direct and enhances binding to RNA. Interacts (via Arg/Ser-rich domain) with FIP1L1 (preferentially via unphosphorylated form and Arg/Glu/Asp-rich domain); this interaction mediates, at least in part, the interaction between the CFIm and CPSF complexes and may be inhibited by CPSF6 hyper-phosphorylation. Interacts (via N-terminus) with NXF1; this interaction is direct. Interacts with SRSF3. Interacts with SRSF7. Interacts with SNRNP70. Interacts with TRA2B/SFRS10. Interacts with UPF1. Interacts with UPF3B. Interacts with VIRMA. Interacts (via Arg/Ser-rich domain) with TNPO3; promoting nuclear import of CPSF6 independently of its phosphorylation status. Interacts with YTHDC1. In terms of assembly, (Microbial infection) Interacts (via C-terminus) with HIV-1 capsid protein p24 (CA). Phosphorylated. Phosphorylated in the Arg/Ser-rich domain by SRPK1, in vitro. Post-translationally, symmetrically dimethylated on arginine residues in the GAR motif by PRMT5 in a WDR77- and CLNS1A-dependent manner. Asymmetrically dimethylated on arginine residues in the GAR motif by PRMT1.

Its subcellular location is the nucleus. The protein localises to the nucleoplasm. It is found in the nucleus speckle. It localises to the cytoplasm. Functionally, component of the cleavage factor Im (CFIm) complex that functions as an activator of the pre-mRNA 3'-end cleavage and polyadenylation processing required for the maturation of pre-mRNA into functional mRNAs. CFIm contributes to the recruitment of multiprotein complexes on specific sequences on the pre-mRNA 3'-end, so called cleavage and polyadenylation signals (pA signals). Most pre-mRNAs contain multiple pA signals, resulting in alternative cleavage and polyadenylation (APA) producing mRNAs with variable 3'-end formation. The CFIm complex acts as a key regulator of cleavage and polyadenylation site choice during APA through its binding to 5'-UGUA-3' elements localized in the 3'-untranslated region (UTR) for a huge number of pre-mRNAs. CPSF6 enhances NUDT21/CPSF5 binding to 5'-UGUA-3' elements localized upstream of pA signals and promotes RNA looping, and hence activates directly the mRNA 3'-processing machinery. Plays a role in mRNA export. In terms of biological role, (Microbial infection) Binds HIV-1 capsid-nucleocapsid (HIV-1 CA-NC) complexes and might thereby promote the integration of the virus in the nucleus of dividing cells (in vitro). In Homo sapiens (Human), this protein is Cleavage and polyadenylation specificity factor subunit 6.